The primary structure comprises 206 residues: Accelerated cell death 11 (206 aa).

Residues D60, K64, R99, R103, and H143 each coordinate an N-acylsphingoid base 1-phosphate.

The protein belongs to the GLTP family. Interacts with BPA1, PRA1F2 and PRA1F3.

The protein localises to the cytoplasm. In terms of biological role, exhibits selective intermembrane transfer of ceramide-1-phosphate (C1P) and phytoceramide-1-phosphate. Does not transport ceramide (Cer) or GalCer, suggesting a requirement for phosphate in the headgroup for functionality. Transports in vitro sphingosine, but not glycosphingolipids. Also has some in vitro activity with sphingomyelin, a lipid not detected in plant tissues. The transport function may be not directly involved in regulating cell death. Rather, perturbations in the function of ACD11 or related components could be monitored by R-proteins, which then mediate defense and programmed cell death (PCD), as proposed in the guard hypothesis. C1P transfer is stimulated by phosphatidylserine in C1P source vesicles. Regulates autophagy, inflammasome mediated IL1B and IL18 processing, and pyroptosis, but not apoptosis. This chain is Accelerated cell death 11, found in Arabidopsis thaliana (Mouse-ear cress).